A 484-amino-acid polypeptide reads, in one-letter code: Major extracellular endoglucanase (484 aa).

An N-terminal signal peptide occupies residues 1–25 (MSIFRTASTLALATALALAAGPAFS). Glutamate 182 serves as the catalytic Proton donor. Residue glutamate 303 is the Nucleophile of the active site. A disordered region spans residues 370–402 (GTAGNTTPTPTPTPTPTPTPTPTPTPTPTPGTS). Positions 375–399 (TTPTPTPTPTPTPTPTPTPTPTPTP) are thr-Pro repeats ('hinge') (Pro-Thr box). A compositionally biased stretch (pro residues) spans 378-398 (TPTPTPTPTPTPTPTPTPTPT). The region spanning 395–484 (PTPTPGTSTF…TAEFGFCAAS (90 aa)) is the CBM2 domain.

Belongs to the glycosyl hydrolase 5 (cellulase A) family.

The enzyme catalyses Endohydrolysis of (1-&gt;4)-beta-D-glucosidic linkages in cellulose, lichenin and cereal beta-D-glucans.. This Xanthomonas campestris pv. campestris (strain ATCC 33913 / DSM 3586 / NCPPB 528 / LMG 568 / P 25) protein is Major extracellular endoglucanase (engXCA).